The primary structure comprises 469 residues: Bile acid receptor (469 aa).

Lys-119 participates in a covalent cross-link: Glycyl lysine isopeptide (Lys-Gly) (interchain with G-Cter in SUMO1). A DNA-binding region (nuclear receptor) is located at residues 121 to 196 (DELCVVCGDR…MGMLAECLLT (76 aa)). Residues 124-144 (CVVCGDRASGYHYNALTCEGC) form an NR C4-type zinc finger. Ser-132 and Ser-151 each carry phosphoserine; by PKC/PRKCA. Lys-154 is modified (N6-acetyllysine; by EP300). An NR C4-type zinc finger spans residues 160-184 (CKNGGNCVMDMYMRRKCQDCRLRKC). At Lys-203 the chain carries N6-methyllysine; by SETD7. Lys-210 carries the post-translational modification N6-acetyllysine; by EP300. Positions 245–469 (DQQTLLDYIM…PLLCEIWDVQ (225 aa)) constitute an NR LBD domain. Lys-272 participates in a covalent cross-link: Glycyl lysine isopeptide (Lys-Gly) (interchain with G-Cter in SUMO1). Arg-328 is a binding site for 3beta,7beta-dihydroxy-5beta-cholan-24-oate. Chenodeoxycholate is bound by residues Arg-328, Tyr-358, and Tyr-366. Residue Tyr-366 participates in 3beta,7beta-dihydroxy-5beta-cholan-24-oate binding. Phosphothreonine; by PKC/PRKCZ is present on Thr-439. His-444 provides a ligand contact to chenodeoxycholate.

It belongs to the nuclear hormone receptor family. NR1 subfamily. In terms of assembly, heterodimer with RXRA; the heterodimerization enhances the binding affinity for LXXLL motifs from coactivators. Binds DNA predominantly as a heterodimer with RXRA. After activation by agonist binding interacts with coactivators. Interacts with NCOA1, NCOA2, PPARGC1A, CARM1, SETD7, PRMT1, GPS2, SMARCA4 and MED1, EP300 and SMARCD1. Interacts with XRCC5 and XRCC6; decreasing NR1H4/FXR transactivation activity towards ABCB11/BSEP. Interacts with PAGR1 AND NCOA6; indicative for an association with an MLL2/MLL3 complex (ASCOM). Acetylated by EP300. Lys-210 as is the major acetylation site for EP300; the dynamicly regulated acetylation inhibits heterodimerization with RXRA and transactivation activity. Deacetylated by SIRT1. In terms of processing, methylation may increase transactivation of target genes. Post-translationally, phosphorylation by PKC/PRKCA increases transactivation activity by promoting association with PPARGC1A. Sumoylated upon ligand binding.

It is found in the nucleus. Functionally, ligand-activated transcription factor. Receptor for bile acids (BAs) such as chenodeoxycholic acid (CDCA), lithocholic acid, deoxycholic acid (DCA) and allocholic acid (ACA). Plays a essential role in BA homeostasis through the regulation of genes involved in BA synthesis, conjugation and enterohepatic circulation. Also regulates lipid and glucose homeostasis and is involved innate immune response. The FXR-RXR heterodimer binds predominantly to farnesoid X receptor response elements (FXREs) containing two inverted repeats of the consensus sequence 5'-AGGTCA-3' in which the monomers are spaced by 1 nucleotide (IR-1) but also to tandem repeat DR1 sites with lower affinity, and can be activated by either FXR or RXR-specific ligands. It is proposed that monomeric nuclear receptors such as NR5A2/LRH-1 bound to coregulatory nuclear responsive element (NRE) halfsites located in close proximity to FXREs modulate transcriptional activity. In the liver activates transcription of the corepressor NR0B2 thereby indirectly inhibiting CYP7A1 and CYP8B1 (involved in BA synthesis) implicating at least in part histone demethylase KDM1A resulting in epigenomic repression, and SLC10A1/NTCP (involved in hepatic uptake of conjugated BAs). Activates transcription of the repressor MAFG (involved in regulation of BA synthesis). Activates transcription of SLC27A5/BACS and BAAT (involved in BA conjugation), ABCB11/BSEP (involved in bile salt export) by directly recruiting histone methyltransferase CARM1, and ABCC2/MRP2 (involved in secretion of conjugated BAs) and ABCB4 (involved in secretion of phosphatidylcholine in the small intestine). Activates transcription of SLC27A5/BACS and BAAT (involved in BA conjugation), ABCB11/BSEP (involved in bile salt export) by directly recruiting histone methyltransferase CARM1, and ABCC2/MRP2 (involved in secretion of conjugated BAs) and ABCB4 (involved in secretion of phosphatidylcholine in the small intestine). In the intestine activates FGF19 expression and secretion leading to hepatic CYP7A1 repression. The function also involves the coordinated induction of hepatic KLB/beta-klotho expression. Regulates transcription of liver UGT2B4 and SULT2A1 involved in BA detoxification; binding to the UGT2B4 promoter seems to imply a monomeric transactivation independent of RXRA. Modulates lipid homeostasis by activating liver NR0B2/SHP-mediated repression of SREBF1 (involved in de novo lipogenesis), expression of PLTP (involved in HDL formation), SCARB1 (involved in HDL hepatic uptake), APOE, APOC1, APOC4, PPARA (involved in beta-oxidation of fatty acids), VLDLR and SDC1 (involved in the hepatic uptake of LDL and IDL remnants), and inhibiting expression of MTTP (involved in VLDL assembly). Increases expression of APOC2 (promoting lipoprotein lipase activity implicated in triglyceride clearance). Transrepresses APOA1 involving a monomeric competition with NR2A1 for binding to a DR1 element. Also reduces triglyceride clearance by inhibiting expression of ANGPTL3 and APOC3 (both involved in inhibition of lipoprotein lipase). Involved in glucose homeostasis by modulating hepatic gluconeogenesis through activation of NR0B2/SHP-mediated repression of respective genes. Modulates glycogen synthesis (inducing phosphorylation of glycogen synthase kinase-3). Modulates glucose-stimulated insulin secretion and is involved in insulin resistance. Involved in intestinal innate immunity. Plays a role in protecting the distal small intestine against bacterial overgrowth and preservation of the epithelial barrier. Down-regulates inflammatory cytokine expression in several types of immune cells including macrophages and mononuclear cells. Mediates trans-repression of TLR4-induced cytokine expression; the function seems to require its sumoylation and prevents N-CoR nuclear receptor corepressor clearance from target genes such as IL1B and NOS2. Involved in the TLR9-mediated protective mechanism in intestinal inflammation. Plays an anti-inflammatory role in liver inflammation; proposed to inhibit pro-inflammatory (but not antiapoptotic) NF-kappa-B signaling. In Rattus norvegicus (Rat), this protein is Bile acid receptor (Nr1h4).